A 64-amino-acid chain; its full sequence is Large ribosomal subunit protein bL32 (64 aa).

The tract at residues 1–36 (MAVQKSRVTPSRRGQRRSHDALSAKQLSTDPTTGEV) is disordered.

It belongs to the bacterial ribosomal protein bL32 family.

The protein is Large ribosomal subunit protein bL32 of Stenotrophomonas maltophilia (strain K279a).